The sequence spans 262 residues: Cyclin-dependent kinase inhibitor 1 (262 aa).

The segment at 140–212 (SDVAEAGSEH…SAQQATRPKI (73 aa)) is disordered. Over residues 160-169 (SGRDRERRET) the composition is skewed to basic and acidic residues. Residues 198–208 (SAATASAQQAT) show a composition bias toward low complexity.

Belongs to the CDI family. ICK/KRP subfamily.

This Oryza sativa subsp. indica (Rice) protein is Cyclin-dependent kinase inhibitor 1 (KRP1).